The sequence spans 427 residues: 3-phosphoshikimate 1-carboxyvinyltransferase (427 aa).

Residues lysine 22, serine 23, and arginine 27 each contribute to the 3-phosphoshikimate site. Residue lysine 22 coordinates phosphoenolpyruvate. Residues glycine 96 and arginine 124 each coordinate phosphoenolpyruvate. 3-phosphoshikimate-binding residues include serine 169, serine 170, glutamine 171, serine 197, aspartate 313, asparagine 336, and lysine 340. Glutamine 171 provides a ligand contact to phosphoenolpyruvate. Catalysis depends on aspartate 313, which acts as the Proton acceptor. Residues arginine 344, arginine 386, and lysine 411 each coordinate phosphoenolpyruvate.

This sequence belongs to the EPSP synthase family. In terms of assembly, monomer.

The protein localises to the cytoplasm. The catalysed reaction is 3-phosphoshikimate + phosphoenolpyruvate = 5-O-(1-carboxyvinyl)-3-phosphoshikimate + phosphate. The protein operates within metabolic intermediate biosynthesis; chorismate biosynthesis; chorismate from D-erythrose 4-phosphate and phosphoenolpyruvate: step 6/7. Functionally, catalyzes the transfer of the enolpyruvyl moiety of phosphoenolpyruvate (PEP) to the 5-hydroxyl of shikimate-3-phosphate (S3P) to produce enolpyruvyl shikimate-3-phosphate and inorganic phosphate. The chain is 3-phosphoshikimate 1-carboxyvinyltransferase from Escherichia coli O9:H4 (strain HS).